A 141-amino-acid polypeptide reads, in one-letter code: Aspartate 1-decarboxylase (141 aa).

Serine 25 functions as the Schiff-base intermediate with substrate; via pyruvic acid in the catalytic mechanism. Position 25 is a pyruvic acid (Ser) (serine 25). Threonine 57 lines the substrate pocket. Tyrosine 58 serves as the catalytic Proton donor. A substrate-binding site is contributed by 73-75 (GAA). The tract at residues 121-141 (ASAPVPGSRTERSPQAVVAGG) is disordered.

The protein belongs to the PanD family. Heterooctamer of four alpha and four beta subunits. Pyruvate serves as cofactor. In terms of processing, is synthesized initially as an inactive proenzyme, which is activated by self-cleavage at a specific serine bond to produce a beta-subunit with a hydroxyl group at its C-terminus and an alpha-subunit with a pyruvoyl group at its N-terminus.

It localises to the cytoplasm. The catalysed reaction is L-aspartate + H(+) = beta-alanine + CO2. The protein operates within cofactor biosynthesis; (R)-pantothenate biosynthesis; beta-alanine from L-aspartate: step 1/1. Catalyzes the pyruvoyl-dependent decarboxylation of aspartate to produce beta-alanine. This chain is Aspartate 1-decarboxylase, found in Streptomyces griseus subsp. griseus (strain JCM 4626 / CBS 651.72 / NBRC 13350 / KCC S-0626 / ISP 5235).